The following is a 214-amino-acid chain: Large ribosomal subunit protein uL16 (214 aa).

It belongs to the universal ribosomal protein uL16 family. Component of the large ribosomal subunit. Mature ribosomes consist of a small (40S) and a large (60S) subunit. The 40S subunit contains about 33 different proteins and 1 molecule of RNA (18S). The 60S subunit contains about 49 different proteins and 3 molecules of RNA (28S, 5.8S and 5S).

The chain is Large ribosomal subunit protein uL16 (rpl-10L) from Caenorhabditis elegans.